The primary structure comprises 255 residues: uncharacterized protein (255 aa).

Belongs to the methyltransferase superfamily.

This is an uncharacterized protein from Mycobacterium ulcerans (strain Agy99).